A 333-amino-acid chain; its full sequence is Galactinol synthase 5 (333 aa).

Lys-103 is an active-site residue. Residues Asp-119, Asp-121, and His-257 each contribute to the Mn(2+) site.

Belongs to the glycosyltransferase 8 family. Galactosyltransferase subfamily. A divalent metal cation serves as cofactor.

It localises to the cytoplasm. It carries out the reaction myo-inositol + UDP-alpha-D-galactose = alpha-D-galactosyl-(1-&gt;3)-1D-myo-inositol + UDP + H(+). In terms of biological role, galactinol synthase involved in the biosynthesis of raffinose family oligosaccharides (RFOs) that function as osmoprotectants. May promote plant stress tolerance. The protein is Galactinol synthase 5 (GOLS5) of Arabidopsis thaliana (Mouse-ear cress).